The sequence spans 32 residues: Photosystem II reaction center protein Z (32 aa).

Residues 9 to 31 (FILIGSASWAALVLLVGSLNSFV) traverse the membrane as a helical segment.

Belongs to the PsbZ family. In terms of assembly, PSII is composed of 1 copy each of membrane proteins PsbA, PsbB, PsbC, PsbD, PsbE, PsbF, PsbH, PsbI, PsbJ, PsbK, PsbL, PsbM, PsbT, PsbY, PsbZ, Psb30/Ycf12, at least 3 peripheral proteins of the oxygen-evolving complex and a large number of cofactors. It forms dimeric complexes.

The protein localises to the plastid. It localises to the chloroplast thylakoid membrane. May control the interaction of photosystem II (PSII) cores with the light-harvesting antenna, regulates electron flow through the 2 photosystem reaction centers. PSII is a light-driven water plastoquinone oxidoreductase, using light energy to abstract electrons from H(2)O, generating a proton gradient subsequently used for ATP formation. The sequence is that of Photosystem II reaction center protein Z from Euglena viridis (Cercaria viridis).